Reading from the N-terminus, the 1167-residue chain is Nucleolar protein 8 (1167 aa).

Residues 8-89 (KRLYVGGLSQ…GTLQIQLAKE (82 aa)) form the RRM domain. The segment at 223–304 (VQKDESSTGS…NSISDDDTDS (82 aa)) is disordered. Lysine 225 participates in a covalent cross-link: Glycyl lysine isopeptide (Lys-Gly) (interchain with G-Cter in SUMO2). A compositionally biased stretch (polar residues) spans 248–275 (LTQQQAAQKRTCDSITPSKSSPVPVSDT). Phosphoserine is present on residues serine 268 and serine 298. Threonine 302 carries the post-translational modification Phosphothreonine. Residue serine 304 is modified to Phosphoserine. Lysine 314 is covalently cross-linked (Glycyl lysine isopeptide (Lys-Gly) (interchain with G-Cter in SUMO2)). Phosphoserine occurs at positions 331 and 365. A Phosphotyrosine modification is found at tyrosine 376. Phosphoserine is present on serine 378. Phosphothreonine is present on threonine 381. Serine 432 carries the post-translational modification Phosphoserine. 5 disordered regions span residues 435–470 (ESALSHGLKSLNRKSPSHSSSSEDADSASELADSEG), 499–533 (LKVPNEDTKSDGPETTTQCKFDRGSKSPKTPTGLR), 590–908 (KDSV…EEEL), 932–982 (NRGS…AEKL), and 1006–1026 (YTSEKEEGTPWNEDCGKEKPE). Positions 457 to 470 (EDADSASELADSEG) are enriched in acidic residues. Positions 501 to 510 (VPNEDTKSDG) are enriched in basic and acidic residues. Residues 640–652 (NYIQPQKRQTTFE) are compositionally biased toward polar residues. Over residues 653–668 (SQDRKAVSPSSSEKRS) the composition is skewed to basic and acidic residues. Phosphoserine is present on serine 723. The span at 727–736 (SSKDTREIKT) shows a compositional bias: basic and acidic residues. The segment covering 738–748 (FSLSISNSSDV) has biased composition (polar residues). Residues 749 to 776 (SAKDKHAEDNEKRLAALEARQKAKEVQK) show a composition bias toward basic and acidic residues. A coiled-coil region spans residues 753–779 (KHAEDNEKRLAALEARQKAKEVQKKLV). Threonine 795 is subject to Phosphothreonine. Position 801 is a phosphoserine (serine 801). The segment covering 817-827 (HPGEEWVKESM) has biased composition (basic and acidic residues). Phosphoserine occurs at positions 837, 838, 843, and 845. Acidic residues predominate over residues 837–847 (SSDDDESDSED). The span at 874-887 (GTDDRFRMDSRFLE) shows a compositional bias: basic and acidic residues. Residues 886–924 (LETDSEEEQEEVNEKKTAEEEELAEEKKKALNVVQSVLQ) are a coiled coil. Residue threonine 888 is modified to Phosphothreonine. Phosphoserine is present on serine 890. Composition is skewed to basic and acidic residues over residues 940-968 (KFKDIIHYDPTKQDHATYERKRDDKPKES) and 1007-1026 (TSEKEEGTPWNEDCGKEKPE). Position 1036 is a phosphoserine (serine 1036). Lysine 1057 is covalently cross-linked (Glycyl lysine isopeptide (Lys-Gly) (interchain with G-Cter in SUMO2)). Disordered stretches follow at residues 1071–1105 (IVWQEDPRLQDSSSEEEDVTEETDHRNSSPGEASL) and 1145–1167 (RTTNLRMDCRKKHKDAKRKMKPK). Phosphoserine occurs at positions 1082, 1083, 1084, and 1099. Basic residues predominate over residues 1153–1167 (CRKKHKDAKRKMKPK).

As to quaternary structure, interacts with the GTP form of RRAGA, RRAGC and RRAGD. Interacts with NIP7. Interacts with DDX18; the interaction is RNA-dependent. Interacts with DDX47; the interaction is RNA-dependent. Post-translationally, phosphorylated. Expressed in various diffuse-type gastric cancers. Detected at lower levels in skeletal muscle.

The protein resides in the nucleus. The protein localises to the nucleolus. In terms of biological role, plays an essential role in the survival of diffuse-type gastric cancer cells. Acts as a nucleolar anchoring protein for DDX47. May be involved in regulation of gene expression at the post-transcriptional level or in ribosome biogenesis in cancer cells. This is Nucleolar protein 8 from Homo sapiens (Human).